Reading from the N-terminus, the 247-residue chain is Triosephosphate isomerase (247 aa).

Residue Asn8–Lys10 coordinates substrate. His94 (electrophile) is an active-site residue. The active-site Proton acceptor is the Glu165. 2 residues coordinate substrate: Gly171 and Ser210.

This sequence belongs to the triosephosphate isomerase family. As to quaternary structure, homodimer.

It localises to the cytoplasm. The enzyme catalyses D-glyceraldehyde 3-phosphate = dihydroxyacetone phosphate. It participates in carbohydrate biosynthesis; gluconeogenesis. The protein operates within carbohydrate degradation; glycolysis; D-glyceraldehyde 3-phosphate from glycerone phosphate: step 1/1. Its function is as follows. Involved in the gluconeogenesis. Catalyzes stereospecifically the conversion of dihydroxyacetone phosphate (DHAP) to D-glyceraldehyde-3-phosphate (G3P). The chain is Triosephosphate isomerase from Aquifex aeolicus (strain VF5).